The sequence spans 267 residues: Undecaprenyl-diphosphatase (267 aa).

The next 8 membrane-spanning stretches (helical) occupy residues 1–21 (MSYF…FLPI), 39–59 (QGLA…VIYF), 83–103 (AKLA…GLVM), 111–131 (LRSA…LWWV), 144–164 (AGWK…IPGT), 189–209 (FLMS…KLVT), 218–238 (FLLT…HLFL), and 246–266 (MTPF…YLLM).

Belongs to the UppP family.

It is found in the cell inner membrane. The enzyme catalyses di-trans,octa-cis-undecaprenyl diphosphate + H2O = di-trans,octa-cis-undecaprenyl phosphate + phosphate + H(+). In terms of biological role, catalyzes the dephosphorylation of undecaprenyl diphosphate (UPP). Confers resistance to bacitracin. The sequence is that of Undecaprenyl-diphosphatase from Vibrio vulnificus (strain CMCP6).